A 506-amino-acid polypeptide reads, in one-letter code: Galactose/methyl galactoside import ATP-binding protein MglA (506 aa).

ABC transporter domains are found at residues L14–S249 and V264–L506. Residue G46–S53 participates in ATP binding.

Belongs to the ABC transporter superfamily. Galactose/methyl galactoside importer (TC 3.A.1.2.3) family. In terms of assembly, the complex is composed of one ATP-binding protein (MglA), two transmembrane proteins (MglC) and a solute-binding protein (MglB).

It is found in the cell inner membrane. It catalyses the reaction D-galactose(out) + ATP + H2O = D-galactose(in) + ADP + phosphate + H(+). It carries out the reaction methyl beta-D-galactoside(out) + ATP + H2O = methyl beta-D-galactoside(in) + ADP + phosphate + H(+). Functionally, part of the ABC transporter complex MglABC involved in galactose/methyl galactoside import. Responsible for energy coupling to the transport system. The polypeptide is Galactose/methyl galactoside import ATP-binding protein MglA (Escherichia coli O6:K15:H31 (strain 536 / UPEC)).